We begin with the raw amino-acid sequence, 523 residues long: Maturase K (523 aa).

It belongs to the intron maturase 2 family. MatK subfamily.

The protein localises to the plastid. Its subcellular location is the chloroplast. In terms of biological role, usually encoded in the trnK tRNA gene intron. Probably assists in splicing its own and other chloroplast group II introns. The chain is Maturase K from Asphodeline lutea (King's spear).